A 77-amino-acid chain; its full sequence is Ras-related C3 botulinum toxin substrate 1 (77 aa).

Lys22–Asp24 contributes to the GTP binding site. Lys53 is covalently cross-linked (Glycyl lysine isopeptide (Lys-Gly) (interchain with G-Cter in ubiquitin)). Ala65–Leu66 contributes to the GTP binding site.

Belongs to the small GTPase superfamily. Rho family. Interacts with NISCH. Interacts with PIP5K1A. Interacts with the GTP-bound form of RAB7A. Interacts with SRGAP2. Interacts with CYFIP1/SRA-1. Interacts with PLXNB3. Interacts with ARHGDIA; the interaction is induced by SEMA5A, mediated through PLXNB3 and inactivates and stabilizes RAC1. Interacts (GTP-bound form preferentially) with PKN2 (via the REM repeats); the interaction stimulates autophosphorylation and phosphorylation of PKN2. Interacts with the GEF proteins PREX1, RASGRF2, FARP1, FARP2, DOCK1, DOCK2 and DOCK7, which promote the exchange between GDP and GTP, and therefore activate it. Interacts with PARD6A, PARD6B and PARD6G in a GTP-dependent manner. Part of a quaternary complex containing PARD3, some PARD6 protein (PARD6A, PARD6B or PARD6G) and some atypical PKC protein (PRKCI or PRKCZ), which plays a central role in epithelial cell polarization. Found in a trimeric complex composed of DOCK1 and ELMO1, which plays a central role in phagocytosis of apoptotic cells. Interacts with RALBP1 via its effector domain. Interacts with PLXNB1. Part of a complex with MAP2K3, MAP3K3, CCM2 and DEF6. Interacts with BAIAP2, BAIAP2L1 and DEF6. Interacts with Y.pseudotuberculosis YPKA and PLCB2. Interacts with NOXA1. Interacts with ARHGEF2. Interacts with TBC1D2. Interacts with UNKL. Interacts with USP6. Interacts with SPATA13. Interacts with ARHGEF16; mediates activation of RAC1 by EPHA2. Interacts with ITGB4. Interacts with S100A8 and calprotectin (S100A8/9). Interacts with PACSIN2. Interacts (when active) with PPP5C (via TPR repeats); activates PPP5C phosphatase activity and translocates PPP5C to the cell membrane. Interacts with RAPH1 (via Ras associating and PH domains). Interacts with MTSS2 (via IMD domain); this interaction may be important to potentiate PDGF-induced RAC1 activation. Interacts with PAK2. Interacts (GTP-bound form) with SH3RF1 and SH3RF3. Found in a complex with SH3RF1, MAPK8IP1/JIP1, MAP3K11/MLK3, MAP2K7/MKK7 and MAPK8/JNK1. Interacts (both active GTP- or inactive GDP-bound forms) with SH3RF2. Interacts (GTP-bound form preferentially) with CYRIB. Interacts with DOCK4 (via DOCKER domain); functions as a guanine nucleotide exchange factor (GEF) for RAC1. Interacts with GARRE1. Interacts with RAP1GDS1. May interact with ARHGAP36. Interacts with DSG3; the interaction is required for DSG3 translocation to cell-cell junctions, organization of cortical F-actin bundles and actin anchoring at cell-cell junctions. Component of the phagocyte NADPH oxidase complex composed of an obligatory core heterodimer formed by the membrane proteins CYBA and CYBB and the cytosolic regulatory subunits NCF1/p47-phox, NCF2/p67-phox, NCF4/p40-phox and the small GTPase RAC1 or RAC2. Interacts with NCF2. Post-translationally, the N-terminus is blocked. GTP-bound active form is ubiquitinated by HACE1, leading to its degradation by the proteasome.

The protein resides in the cytoplasm. Its subcellular location is the membrane. The protein localises to the melanosome. It localises to the cell projection. It is found in the lamellipodium. The protein resides in the dendrite. Its subcellular location is the synapse. The protein localises to the nucleus. It catalyses the reaction GTP + H2O = GDP + phosphate + H(+). Its activity is regulated as follows. Regulated by guanine nucleotide exchange factors (GEFs) which promote the exchange of bound GDP for free GTP, GTPase activating proteins (GAPs) which increase the GTP hydrolysis activity, and GDP dissociation inhibitors which inhibit the dissociation of the nucleotide from the GTPase. GTP hydrolysis is stimulated by ARHGAP30. Functionally, plasma membrane-associated small GTPase which cycles between active GTP-bound and inactive GDP-bound states. In its active state, binds to a variety of effector proteins to regulate cellular responses such as secretory processes, phagocytosis of apoptotic cells, epithelial cell polarization, neurons adhesion, migration and differentiation, and growth-factor induced formation of membrane ruffles. Rac1 p21/rho GDI heterodimer is the active component of the cytosolic factor sigma 1, which is involved in stimulation of the NADPH oxidase activity in macrophages. Essential for the SPATA13-mediated regulation of cell migration and adhesion assembly and disassembly. Stimulates PKN2 kinase activity. In concert with RAB7A, plays a role in regulating the formation of RBs (ruffled borders) in osteoclasts. In podocytes, promotes nuclear shuttling of NR3C2; this modulation is required for a proper kidney functioning. Required for atypical chemokine receptor ACKR2-induced LIMK1-PAK1-dependent phosphorylation of cofilin (CFL1) and for up-regulation of ACKR2 from endosomal compartment to cell membrane, increasing its efficiency in chemokine uptake and degradation. In neurons, is involved in dendritic spine formation and synaptic plasticity. In hippocampal neurons, involved in spine morphogenesis and synapse formation, through local activation at synapses by guanine nucleotide exchange factors (GEFs), such as ARHGEF6/ARHGEF7/PIX. In synapses, seems to mediate the regulation of F-actin cluster formation performed by SHANK3. In neurons, plays a crucial role in regulating GABA(A) receptor synaptic stability and hence GABAergic inhibitory synaptic transmission through its role in PAK1 activation and eventually F-actin stabilization. Required for DSG3 translocation to cell-cell junctions, DSG3-mediated organization of cortical F-actin bundles and anchoring of actin at cell junctions; via interaction with DSG3. Subunit of the phagocyte NADPH oxidase complex that mediates the transfer of electrons from cytosolic NADPH to O2 to produce the superoxide anion (O2(-)). The protein is Ras-related C3 botulinum toxin substrate 1 of Cavia porcellus (Guinea pig).